Consider the following 308-residue polypeptide: Aspartate carbamoyltransferase catalytic subunit (308 aa).

Residues arginine 57 and threonine 58 each coordinate carbamoyl phosphate. Residue lysine 86 coordinates L-aspartate. Carbamoyl phosphate contacts are provided by arginine 107, histidine 135, and glutamine 138. L-aspartate is bound by residues arginine 167 and arginine 228. Carbamoyl phosphate-binding residues include leucine 267 and proline 268.

This sequence belongs to the aspartate/ornithine carbamoyltransferase superfamily. ATCase family. In terms of assembly, heterooligomer of catalytic and regulatory chains.

The catalysed reaction is carbamoyl phosphate + L-aspartate = N-carbamoyl-L-aspartate + phosphate + H(+). It functions in the pathway pyrimidine metabolism; UMP biosynthesis via de novo pathway; (S)-dihydroorotate from bicarbonate: step 2/3. Its function is as follows. Catalyzes the condensation of carbamoyl phosphate and aspartate to form carbamoyl aspartate and inorganic phosphate, the committed step in the de novo pyrimidine nucleotide biosynthesis pathway. The sequence is that of Aspartate carbamoyltransferase catalytic subunit from Methanococcoides burtonii (strain DSM 6242 / NBRC 107633 / OCM 468 / ACE-M).